The following is a 240-amino-acid chain: Small ribosomal subunit protein uS2 (240 aa).

The protein belongs to the universal ribosomal protein uS2 family.

The chain is Small ribosomal subunit protein uS2 from Haemophilus influenzae (strain 86-028NP).